A 74-amino-acid polypeptide reads, in one-letter code: Translation initiation factor IF-1, chloroplastic (74 aa).

An S1-like domain is found at 1–72 (MERQNLIEME…TKGRITYRLR (72 aa)).

It belongs to the IF-1 family. In terms of assembly, component of the 30S ribosomal translation pre-initiation complex which assembles on the 30S ribosome in the order IF-2 and IF-3, IF-1 and N-formylmethionyl-tRNA(fMet); mRNA recruitment can occur at any time during PIC assembly.

The protein localises to the plastid. The protein resides in the chloroplast. Functionally, one of the essential components for the initiation of protein synthesis. Stabilizes the binding of IF-2 and IF-3 on the 30S subunit to which N-formylmethionyl-tRNA(fMet) subsequently binds. Helps modulate mRNA selection, yielding the 30S pre-initiation complex (PIC). Upon addition of the 50S ribosomal subunit IF-1, IF-2 and IF-3 are released leaving the mature 70S translation initiation complex. The polypeptide is Translation initiation factor IF-1, chloroplastic (Mesostigma viride (Green alga)).